The sequence spans 426 residues: 3-phosphoshikimate 1-carboxyvinyltransferase (426 aa).

The 3-phosphoshikimate site is built by lysine 22, serine 23, and arginine 27. Lysine 22 provides a ligand contact to phosphoenolpyruvate. Phosphoenolpyruvate is bound by residues glycine 96 and arginine 124. 3-phosphoshikimate-binding residues include serine 170, serine 171, glutamine 172, serine 198, aspartate 314, asparagine 337, and lysine 341. Glutamine 172 contacts phosphoenolpyruvate. The active-site Proton acceptor is aspartate 314. Phosphoenolpyruvate-binding residues include arginine 345, arginine 387, and lysine 412.

The protein belongs to the EPSP synthase family. As to quaternary structure, monomer.

Its subcellular location is the cytoplasm. It carries out the reaction 3-phosphoshikimate + phosphoenolpyruvate = 5-O-(1-carboxyvinyl)-3-phosphoshikimate + phosphate. It participates in metabolic intermediate biosynthesis; chorismate biosynthesis; chorismate from D-erythrose 4-phosphate and phosphoenolpyruvate: step 6/7. Catalyzes the transfer of the enolpyruvyl moiety of phosphoenolpyruvate (PEP) to the 5-hydroxyl of shikimate-3-phosphate (S3P) to produce enolpyruvyl shikimate-3-phosphate and inorganic phosphate. This is 3-phosphoshikimate 1-carboxyvinyltransferase from Shewanella piezotolerans (strain WP3 / JCM 13877).